Reading from the N-terminus, the 66-residue chain is Protein I177L (66 aa).

Asn-11 carries N-linked (GlcNAc...) asparagine; by host glycosylation.

Belongs to the asfivirus I177L family.

Its subcellular location is the virion. This Ornithodoros (relapsing fever ticks) protein is Protein I177L.